The sequence spans 809 residues: Probable replication endonuclease from prophage-like region (809 aa).

Residues Tyr503 and Tyr507 each act as O-(5'-phospho-DNA)-tyrosine intermediate in the active site.

The protein belongs to the phage GPA family.

In terms of biological role, possible endonuclease which induces a single-strand cut and initiates DNA replication. This Salmonella typhimurium (strain LT2 / SGSC1412 / ATCC 700720) protein is Probable replication endonuclease from prophage-like region.